Reading from the N-terminus, the 483-residue chain is Altronate oxidoreductase (483 aa).

18–29 (IIQFGEGNFLRA) is an NAD(+) binding site.

The protein belongs to the mannitol dehydrogenase family. UxaB subfamily.

It carries out the reaction D-altronate + NAD(+) = keto-D-tagaturonate + NADH + H(+). Its pathway is carbohydrate metabolism; pentose and glucuronate interconversion. This chain is Altronate oxidoreductase, found in Escherichia coli O1:K1 / APEC.